The primary structure comprises 245 residues: MNILAVIPARYQSQRFPGKPLVMLDERPMVQWVYEAAKSCDFFQDAVVATDSDKIADCVKGFGGKVVMTRDDHLTGTDRVAEVAGFYDDMDVVVNVQGDQPFVTPEALEQLVRPYREGERPEMTTLGCPLDMDEDYASPNAVKVLCDRNGHALYFSRSPIPYFRTQGTVPVYHHLGLYAFRHDFLMQYSQLEPTPFETCEGLEQLRVLEYGYAIKVCQTQKAAIEINTPEDLVKAQLFIQQGMTS.

The protein belongs to the KdsB family.

It is found in the cytoplasm. The enzyme catalyses 3-deoxy-alpha-D-manno-oct-2-ulosonate + CTP = CMP-3-deoxy-beta-D-manno-octulosonate + diphosphate. It participates in nucleotide-sugar biosynthesis; CMP-3-deoxy-D-manno-octulosonate biosynthesis; CMP-3-deoxy-D-manno-octulosonate from 3-deoxy-D-manno-octulosonate and CTP: step 1/1. Its pathway is bacterial outer membrane biogenesis; lipopolysaccharide biosynthesis. In terms of biological role, activates KDO (a required 8-carbon sugar) for incorporation into bacterial lipopolysaccharide in Gram-negative bacteria. This chain is 3-deoxy-manno-octulosonate cytidylyltransferase, found in Acaryochloris marina (strain MBIC 11017).